Consider the following 365-residue polypeptide: Peptidyl-prolyl cis-trans isomerase FKBP42 (365 aa).

Over residues 1 to 15 (MDESLEHQTQTHDQE) the composition is skewed to basic and acidic residues. Residues 1-44 (MDESLEHQTQTHDQESEIVTEGSAVVHSEPSQEGNVPPKVDSEA) form a disordered region. Positions 1–163 (MDESLEHQTQ…EVIGFDETKE (163 aa)) are interaction with MDR1/PGP1. A PPIase FKBP-type domain is found at 67–159 (YSTCFLHYRA…LYEVEVIGFD (93 aa)). Residues 163–337 (EGKARSDMTV…GKDEGGAKSK (175 aa)) are interaction with MRP1. TPR repeat units lie at residues 179 to 212 (ADRR…MGDD), 230 to 263 (NPCH…EEKN), and 264 to 297 (PKAL…APDD). The tract at residues 310-326 (QEKALYQKQKEMYKGIF) is calmodulin-binding. A helical; Anchor for type IV membrane protein transmembrane segment spans residues 338–357 (SLFWLIVLWQWFVSLFSRIF).

This sequence belongs to the FKBP-type PPIase family. Interacts with calmodulin (CaM), MRP1, MRP2, MDR1/PGP1, MDR11/PGP19 and SHD/HSP90. Interacts with 1-naphthylphthalamic acid (NPA).

The protein localises to the cell membrane. It localises to the vacuole membrane. Its subcellular location is the endoplasmic reticulum. The catalysed reaction is [protein]-peptidylproline (omega=180) = [protein]-peptidylproline (omega=0). In terms of biological role, PPIases accelerate the folding of proteins. It catalyzes the cis-trans isomerization of proline imidic peptide bonds in oligopeptides. Modulates the uptake of MRP substrates into the vacuole; reduces metolachlor-GS (MOC-GS) and enhances 17-beta-estradiol 17-(beta-D-glucuronide) (E(2)17betaG) uptake. Regulates cell elongation and orientation. Functions as a positive regulator of PGP1-mediated auxin transport. Confers drug modulation of PGP1 efflux activity as interaction with NPA or flavonol quercetin prevents its physical and functional interaction with PGP1. Required for the proper localization of auxin-related ABCB transporters. Plays a role in brassinosteroid (BR) signaling pathway. Required for seed development by promoting stamen elongation and, to a lesser extent, anther dehiscence and pollen maturation, probably as a chaperone helping ABCB1 and ABCB19 auxin transporters localization and activation. Involved in auxin signaling in nectaries to promote starch accumulation to attract visiting pollinators. This chain is Peptidyl-prolyl cis-trans isomerase FKBP42, found in Arabidopsis thaliana (Mouse-ear cress).